The chain runs to 317 residues: tRNA pseudouridine synthase B (317 aa).

Aspartate 47 acts as the Nucleophile in catalysis.

This sequence belongs to the pseudouridine synthase TruB family. Type 1 subfamily.

The catalysed reaction is uridine(55) in tRNA = pseudouridine(55) in tRNA. Its function is as follows. Responsible for synthesis of pseudouridine from uracil-55 in the psi GC loop of transfer RNAs. In Shewanella woodyi (strain ATCC 51908 / MS32), this protein is tRNA pseudouridine synthase B.